Consider the following 409-residue polypeptide: Homoserine O-succinyltransferase (409 aa).

The AB hydrolase-1 domain maps to 43-380 (NAIVVCHALN…PHGHDAFLLD (338 aa)). The active-site Nucleophile is S149. R219 lines the substrate pocket. Positions 244 to 268 (TLPAARGSLPPEGTDPTRGGPASDR) are disordered. Catalysis depends on residues D341 and H374. D375 provides a ligand contact to substrate.

Belongs to the AB hydrolase superfamily. MetX family. Homodimer.

The protein localises to the cytoplasm. The enzyme catalyses L-homoserine + succinyl-CoA = O-succinyl-L-homoserine + CoA. It participates in amino-acid biosynthesis; L-methionine biosynthesis via de novo pathway; O-succinyl-L-homoserine from L-homoserine: step 1/1. In terms of biological role, transfers a succinyl group from succinyl-CoA to L-homoserine, forming succinyl-L-homoserine. This is Homoserine O-succinyltransferase from Comamonas testosteroni (strain DSM 14576 / KF-1) (Pseudomonas testosteroni).